An 89-amino-acid chain; its full sequence is Small ribosomal subunit protein bS20 (89 aa).

The segment at M1 to S28 is disordered.

Belongs to the bacterial ribosomal protein bS20 family.

Binds directly to 16S ribosomal RNA. The polypeptide is Small ribosomal subunit protein bS20 (Haemophilus ducreyi (strain 35000HP / ATCC 700724)).